The chain runs to 92 residues: Small ribosomal subunit protein uS17 (92 aa).

This sequence belongs to the universal ribosomal protein uS17 family. As to quaternary structure, part of the 30S ribosomal subunit.

In terms of biological role, one of the primary rRNA binding proteins, it binds specifically to the 5'-end of 16S ribosomal RNA. The sequence is that of Small ribosomal subunit protein uS17 from Wigglesworthia glossinidia brevipalpis.